Reading from the N-terminus, the 406-residue chain is Phosphopentomutase (406 aa).

Aspartate 10, aspartate 305, histidine 310, aspartate 346, histidine 347, and histidine 358 together coordinate Mn(2+).

This sequence belongs to the phosphopentomutase family. Requires Mn(2+) as cofactor.

The protein resides in the cytoplasm. The enzyme catalyses 2-deoxy-alpha-D-ribose 1-phosphate = 2-deoxy-D-ribose 5-phosphate. The catalysed reaction is alpha-D-ribose 1-phosphate = D-ribose 5-phosphate. Its pathway is carbohydrate degradation; 2-deoxy-D-ribose 1-phosphate degradation; D-glyceraldehyde 3-phosphate and acetaldehyde from 2-deoxy-alpha-D-ribose 1-phosphate: step 1/2. Functionally, isomerase that catalyzes the conversion of deoxy-ribose 1-phosphate (dRib-1-P) and ribose 1-phosphate (Rib-1-P) to deoxy-ribose 5-phosphate (dRib-5-P) and ribose 5-phosphate (Rib-5-P), respectively. This is Phosphopentomutase from Vibrio cholerae serotype O1 (strain ATCC 39315 / El Tor Inaba N16961).